We begin with the raw amino-acid sequence, 66 residues long: Large ribosomal subunit protein bL33c (66 aa).

It belongs to the bacterial ribosomal protein bL33 family.

The protein resides in the plastid. It localises to the chloroplast. The protein is Large ribosomal subunit protein bL33c of Ipomoea purpurea (Common morning glory).